We begin with the raw amino-acid sequence, 229 residues long: Potassium/proton antiporter CemA (229 aa).

3 consecutive transmembrane segments (helical) span residues 7–27 (FLPL…SLSF), 106–126 (MILH…YSIL), and 189–209 (IISG…KYWI).

This sequence belongs to the CemA family.

The protein resides in the plastid. Its subcellular location is the chloroplast inner membrane. The enzyme catalyses K(+)(in) + H(+)(out) = K(+)(out) + H(+)(in). Functionally, contributes to K(+)/H(+) antiport activity by supporting proton efflux to control proton extrusion and homeostasis in chloroplasts in a light-dependent manner to modulate photosynthesis. Prevents excessive induction of non-photochemical quenching (NPQ) under continuous-light conditions. Indirectly promotes efficient inorganic carbon uptake into chloroplasts. The polypeptide is Potassium/proton antiporter CemA (Eucalyptus globulus subsp. globulus (Tasmanian blue gum)).